Reading from the N-terminus, the 314-residue chain is tRNA pseudouridine synthase B (314 aa).

Aspartate 54 serves as the catalytic Nucleophile.

The protein belongs to the pseudouridine synthase TruB family. Type 1 subfamily.

It carries out the reaction uridine(55) in tRNA = pseudouridine(55) in tRNA. Its function is as follows. Responsible for synthesis of pseudouridine from uracil-55 in the psi GC loop of transfer RNAs. The chain is tRNA pseudouridine synthase B from Cupriavidus metallidurans (strain ATCC 43123 / DSM 2839 / NBRC 102507 / CH34) (Ralstonia metallidurans).